The chain runs to 101 residues: MSSTPAAASATPSHGALPAYDTPLGITNPPIDELLARTSSKYALVIYAAKRARQINDYYNQLGDGILEYVGPLVEPGLQEKPLSIALREIHSDLLEHTEGE.

Residues 1–13 (MSSTPAAASATPS) show a composition bias toward low complexity. A disordered region spans residues 1 to 22 (MSSTPAAASATPSHGALPAYDT).

It belongs to the RNA polymerase subunit omega family. As to quaternary structure, the RNAP catalytic core consists of 2 alpha, 1 beta, 1 beta' and 1 omega subunit. When a sigma factor is associated with the core the holoenzyme is formed, which can initiate transcription.

It catalyses the reaction RNA(n) + a ribonucleoside 5'-triphosphate = RNA(n+1) + diphosphate. In terms of biological role, promotes RNA polymerase assembly. Latches the N- and C-terminal regions of the beta' subunit thereby facilitating its interaction with the beta and alpha subunits. This chain is DNA-directed RNA polymerase subunit omega, found in Rhodococcus jostii (strain RHA1).